The following is a 764-amino-acid chain: 5-methyltetrahydropteroyltriglutamate--homocysteine methyltransferase (764 aa).

5-methyltetrahydropteroyltri-L-glutamate is bound by residues 16 to 19 and Lys117; that span reads RELK. L-homocysteine-binding positions include 442–444 and Glu495; that span reads IGS. Residues 442 to 444 and Glu495 contribute to the L-methionine site; that span reads IGS. Residues 526–527 and Trp572 each bind 5-methyltetrahydropteroyltri-L-glutamate; that span reads RC. Asp610 contributes to the L-homocysteine binding site. Asp610 provides a ligand contact to L-methionine. A 5-methyltetrahydropteroyltri-L-glutamate-binding site is contributed by Glu616. Zn(2+) is bound by residues His652, Cys654, and Glu676. His705 acts as the Proton donor in catalysis. Cys737 contributes to the Zn(2+) binding site.

This sequence belongs to the vitamin-B12 independent methionine synthase family. Zn(2+) is required as a cofactor.

The enzyme catalyses 5-methyltetrahydropteroyltri-L-glutamate + L-homocysteine = tetrahydropteroyltri-L-glutamate + L-methionine. Its pathway is amino-acid biosynthesis; L-methionine biosynthesis via de novo pathway; L-methionine from L-homocysteine (MetE route): step 1/1. Catalyzes the transfer of a methyl group from 5-methyltetrahydrofolate to homocysteine resulting in methionine formation. This is 5-methyltetrahydropteroyltriglutamate--homocysteine methyltransferase from Bordetella petrii (strain ATCC BAA-461 / DSM 12804 / CCUG 43448).